The following is a 393-amino-acid chain: uncharacterized protein (393 aa).

Residues 250 to 389 (AVIVYDTMYN…KCYEFGKRLA (140 aa)) enclose the Flavodoxin-like domain.

This is an uncharacterized protein from Methanocaldococcus jannaschii (strain ATCC 43067 / DSM 2661 / JAL-1 / JCM 10045 / NBRC 100440) (Methanococcus jannaschii).